Here is a 2758-residue protein sequence, read N- to C-terminus: Highly reducing polyketide synthase NEC1 (2758 aa).

The Ketosynthase family 3 (KS3) domain occupies 153–492 (EASSPIIGLD…GSNAHVVMDD (340 aa)). The disordered stretch occupies residues 512 to 576 (PRLPGSSSSR…NTDTLQTTDT (65 aa)). Residues 566–576 (TNTDTLQTTDT) show a composition bias toward low complexity. The segment at 700–1044 (VFTGQGAQWP…GYATVLKRGD (345 aa)) is malonyl-CoA:ACP transacylase (MAT) domain. Ser-790 functions as the For malonyltransferase activity in the catalytic mechanism. The interval 1124–1255 (HELLGAPVPD…GFVRTEYSQT (132 aa)) is N-terminal hotdog fold. A dehydratase (DH) domain region spans residues 1124-1442 (HELLGAPVPD…VFKTIPNTAS (319 aa)). The 320-residue stretch at 1124 to 1443 (HELLGAPVPD…FKTIPNTASS (320 aa)) folds into the PKS/mFAS DH domain. His-1156 acts as the Proton acceptor; for dehydratase activity in catalysis. The interval 1283–1443 (TSMVHADKVY…FKTIPNTASS (161 aa)) is C-terminal hotdog fold. Asp-1351 acts as the Proton donor; for dehydratase activity in catalysis. The tract at residues 1622–1727 (LEVGGGTGGA…RKLLKPGGKL (106 aa)) is methyltransferase (CMet) domain. Residues 2031–2344 (GTADVCFSED…LGKGEDAVVL (314 aa)) are enoyl reductase (ER) domain. The interval 2372–2553 (ASYMVVGGLG…PVAVSLDLPV (182 aa)) is ketoreductase (KR) domain. A Carrier domain is found at 2673–2750 (EAQAVVLDAL…ALAAAVAGRS (78 aa)). An O-(pantetheine 4'-phosphoryl)serine modification is found at Ser-2710.

Highly reducing polyketide synthase; part of the gene cluster that mediates the biosynthesis of nectriapyrone and its analogs phomopyrone A, acropyrone and zaepyrone. The nectriapyrone biosynthetic gene cluster consists of two genes, the highly reducing polyketide synthase NEC1 that produces a demethylated analog of nectriapyrone from one unit of acetyl-CoA and one unit of malonyl-CoA; and the O-methyltransferase NEC2 that further methylates the NEC1 product to yield nectriapyrone. Nectriapyrone is further hydrolyzed to nectriapyrone D, also known as gulypyrone B, by an unidentified hydrolase localized outside the nectriapyrone cluster. In Pyricularia oryzae (strain 70-15 / ATCC MYA-4617 / FGSC 8958) (Rice blast fungus), this protein is Highly reducing polyketide synthase NEC1.